The following is a 141-amino-acid chain: VLSSTDKSNVKAAWDKVGGHVGEYGAEALERMFLSFPTTKTYFPHFDLAHGSSQVKAHGKKVGDALTNAVGHIDDLPGALSALSDLHAYKLRVDPVNFKLLSHCLLVTLASHLPSDFTPAVHASLDKFLASVSTVLTSKYR.

Residues 1-141 (VLSSTDKSNV…VSTVLTSKYR (141 aa)) form the Globin domain. Ser-3 is subject to Phosphoserine. An N6-succinyllysine mark is found at Lys-7 and Lys-11. Lys-16 bears the N6-acetyllysine; alternate mark. Lys-16 carries the post-translational modification N6-succinyllysine; alternate. Tyr-24 bears the Phosphotyrosine mark. Ser-35 carries the phosphoserine modification. Lys-40 carries the post-translational modification N6-succinyllysine. An O2-binding site is contributed by His-58. Heme b is bound at residue His-87. The residue at position 102 (Ser-102) is a Phosphoserine. A Phosphothreonine modification is found at Thr-108. Phosphoserine occurs at positions 124 and 131. Residues Thr-134 and Thr-137 each carry the phosphothreonine modification. Ser-138 carries the post-translational modification Phosphoserine.

This sequence belongs to the globin family. Heterotetramer of two alpha chains and two beta chains. As to expression, red blood cells.

Functionally, involved in oxygen transport from the lung to the various peripheral tissues. Its function is as follows. Hemopressin acts as an antagonist peptide of the cannabinoid receptor CNR1. Hemopressin-binding efficiently blocks cannabinoid receptor CNR1 and subsequent signaling. This Pteropus alecto (Black flying fox) protein is Hemoglobin subunit alpha (HBA).